Here is a 63-residue protein sequence, read N- to C-terminus: Large ribosomal subunit protein bL28 (63 aa).

This sequence belongs to the bacterial ribosomal protein bL28 family.

This Desulfitobacterium hafniense (strain DSM 10664 / DCB-2) protein is Large ribosomal subunit protein bL28.